The primary structure comprises 735 residues: Translation initiation factor IF-2 (735 aa).

2 stretches are compositionally biased toward basic and acidic residues: residues 52–66 (VNSE…EKPK) and 101–117 (KGKE…EKKL). The interval 52–154 (VNSEKKAEKK…PAKKEKELPK (103 aa)) is disordered. The span at 121–133 (AKKKGKGPMKGKK) shows a compositional bias: basic residues. Residues 134 to 145 (QAAPASKQAQQP) show a composition bias toward low complexity. Positions 236 to 405 (ERPPVVTIMG…LLVSEMEELK (170 aa)) constitute a tr-type G domain. Residues 245–252 (GHVDHGKT) are G1. 245–252 (GHVDHGKT) contributes to the GTP binding site. A G2 region spans residues 270 to 274 (GITQH). The tract at residues 291–294 (DTPG) is G3. Residues 291–295 (DTPGH) and 345–348 (NKMD) contribute to the GTP site. A G4 region spans residues 345–348 (NKMD). The tract at residues 381–383 (SAK) is G5.

The protein belongs to the TRAFAC class translation factor GTPase superfamily. Classic translation factor GTPase family. IF-2 subfamily.

It localises to the cytoplasm. Its function is as follows. One of the essential components for the initiation of protein synthesis. Protects formylmethionyl-tRNA from spontaneous hydrolysis and promotes its binding to the 30S ribosomal subunits. Also involved in the hydrolysis of GTP during the formation of the 70S ribosomal complex. In Geobacillus thermodenitrificans (strain NG80-2), this protein is Translation initiation factor IF-2.